Here is a 396-residue protein sequence, read N- to C-terminus: 1-deoxy-D-xylulose 5-phosphate reductoisomerase (396 aa).

NADPH-binding residues include Thr13, Gly14, Ser15, Ile16, and Asn127. Lys128 lines the 1-deoxy-D-xylulose 5-phosphate pocket. Residue Glu129 coordinates NADPH. Asp153 lines the Mn(2+) pocket. Positions 154, 155, 184, and 207 each coordinate 1-deoxy-D-xylulose 5-phosphate. Glu155 serves as a coordination point for Mn(2+). Gly213 contacts NADPH. The 1-deoxy-D-xylulose 5-phosphate site is built by Ser220, Asn225, Lys226, and Glu229. Mn(2+) is bound at residue Glu229.

Belongs to the DXR family. It depends on Mg(2+) as a cofactor. Requires Mn(2+) as cofactor.

It carries out the reaction 2-C-methyl-D-erythritol 4-phosphate + NADP(+) = 1-deoxy-D-xylulose 5-phosphate + NADPH + H(+). Its pathway is isoprenoid biosynthesis; isopentenyl diphosphate biosynthesis via DXP pathway; isopentenyl diphosphate from 1-deoxy-D-xylulose 5-phosphate: step 1/6. Its function is as follows. Catalyzes the NADPH-dependent rearrangement and reduction of 1-deoxy-D-xylulose-5-phosphate (DXP) to 2-C-methyl-D-erythritol 4-phosphate (MEP). The polypeptide is 1-deoxy-D-xylulose 5-phosphate reductoisomerase (Pseudomonas fluorescens (strain Pf0-1)).